The following is a 144-amino-acid chain: MLSPRKTKFRKHHRGRMKGISTRGNSIVFGKFALQALEPSWITSRQIEAGRRSMTRYARRGGKIWIRIFPDKPVTMRPAETRMGSGKGSPEYWVAVVKPGRILYEMDGVPENIARAAMKIAAYKMPNKTQFLIRDNKDLIDSKI.

It belongs to the universal ribosomal protein uL16 family. Part of the 50S ribosomal subunit.

It is found in the plastid. The protein localises to the chloroplast. This Chara vulgaris (Common stonewort) protein is Large ribosomal subunit protein uL16c.